A 642-amino-acid chain; its full sequence is Chaperone protein HtpG (642 aa).

The a; substrate-binding stretch occupies residues 1–348 (MSTKIEQLEF…AQDLSLNVSR (348 aa)). A b region spans residues 349-564 (EILQQDRQIR…AFSMSPALER (216 aa)). Residues 565–642 (MYRASGQPVP…MLANRLARTV (78 aa)) are c.

Belongs to the heat shock protein 90 family. Homodimer.

The protein resides in the cytoplasm. Molecular chaperone. Has ATPase activity. This chain is Chaperone protein HtpG, found in Rhodococcus jostii (strain RHA1).